The sequence spans 1579 residues: tRNA (guanosine(18)-2'-O)-methyltransferase TARBP1 (1579 aa).

Met1 is modified (N-acetylmethionine). Residues Val1501, Gly1524, Ile1544, Gln1546, and Leu1553 each contribute to the S-adenosyl-L-homocysteine site.

Belongs to the class IV-like SAM-binding methyltransferase superfamily. RNA methyltransferase TrmH family. In terms of assembly, monomer and homodimer.

It carries out the reaction guanosine(18) in tRNA + S-adenosyl-L-methionine = 2'-O-methylguanosine(18) in tRNA + S-adenosyl-L-homocysteine + H(+). S-adenosyl-L-methionine-dependent 2'-O-ribose methyltransferase that catalyzes the formation of 2'-O-methylguanosine at position 18 (Gm18) in a subset of tRNA. Selectively mediates Gm18 methylation of tRNAGln-TTG/CTG and tRNASer-TGA/GCT. Gm18 modification can enhance the stability of modified tRNAs. This is tRNA (guanosine(18)-2'-O)-methyltransferase TARBP1 from Mus musculus (Mouse).